Consider the following 240-residue polypeptide: Small ribosomal subunit protein uS3 (240 aa).

The KH type-2 domain occupies 39–109 (IRQHIDANLN…QIRINVVEVN (71 aa)). The segment at 216–240 (TSAANAAPLPRRKSRRQQFEDRSEQ) is disordered.

This sequence belongs to the universal ribosomal protein uS3 family. In terms of assembly, part of the 30S ribosomal subunit. Forms a tight complex with proteins S10 and S14.

Binds the lower part of the 30S subunit head. Binds mRNA in the 70S ribosome, positioning it for translation. The sequence is that of Small ribosomal subunit protein uS3 from Picosynechococcus sp. (strain ATCC 27264 / PCC 7002 / PR-6) (Agmenellum quadruplicatum).